An 83-amino-acid polypeptide reads, in one-letter code: Conotoxin MiEr92 (83 aa).

The N-terminal stretch at 1–22 is a signal peptide; sequence MKLTCVLIVIMLFLTVCPLITA. The propeptide occupies 23-49; sequence DHSRDKQEHPAMRLKDRIRYLRRGKLT. Intrachain disulfides connect Cys-52-Cys-67, Cys-59-Cys-72, and Cys-66-Cys-81.

Belongs to the conotoxin O1 superfamily. As to expression, expressed by the venom duct.

The protein localises to the secreted. The chain is Conotoxin MiEr92 from Conus miles (Soldier cone).